A 254-amino-acid polypeptide reads, in one-letter code: Protein GltF (254 aa).

The signal sequence occupies residues 1–25 (MFFKKNLTTAAICAALSVAAFSAMA). The helical transmembrane segment at 213–229 (PVAITAVTFPLLIDAAV) threads the bilayer.

It to E.coli YhcF.

The protein resides in the cell membrane. In terms of biological role, involved in induction of the so-called NTR enzymes in response to nitrogen deprivation, as well as in glutamate biosynthesis. May mediate the glutamate-dependent repression of the GLT operon. In Escherichia coli (strain K12), this protein is Protein GltF (gltF).